A 505-amino-acid chain; its full sequence is MTNTNNEYVLIAGSISKNTEKLYIDRAHSFVRALTKSILDANVGLVVYLAGEPVNENGALLTFDWTIVKEAVDLMENYTPAHQLKIVTSRSAMREKMSEENRMLIRKLQVARFADVSYLDDDLITGGNIGSEQVDAATAMIALGGGKGVSDRASKMRKANHPILPFDLELGGICDDGKGALGLHAHFYAEPLSMFPCTGEAVKNQLDTLSLQEPYYGLERLSEIAVELLKAEWAAQQLLHTPSVLILTALPVELAAAKKVFGIADDESPRLTSNGIHFWSTSIQRSDGPVTGIVASFASAGNVNASAITTMLLSEFKPQKVLMMGIAAGLREKMVLGEVIISERVIYYESAAALEGGKFAPRPEILCLHMPTKQNLNTYLATTSLSARLGERAQAIGLEMPVNSQAGDVAAGIIVSSATIASGELLIRDPALLERFRSLHDKACVAEMEAYGVFDACEKQGVPALIVRGISDFGDSTKDDAFHSIASVAAAIITADYLQHGWIRA.

The tract at residues 1 to 229 is cyclic oligonucleotide sensing-domain; sequence MTNTNNEYVL…RLSEIAVELL (229 aa). The interval 239-505 is purine nucleoside phosphorylase domain; the sequence is LHTPSVLILT…DYLQHGWIRA (267 aa).

This sequence belongs to the Cap17 family.

The catalysed reaction is ATP + H2O = D-ribose 5-triphosphate + adenine. It catalyses the reaction dATP + H2O = 2-deoxyribose 5-triphosphate + adenine. Effector protein with (d)ATP degrading activity of a CBASS antivirus system. CBASS (cyclic oligonucleotide-based antiphage signaling system) provides immunity against bacteriophage. A CD-NTase protein synthesizes cyclic nucleotides in response to infection; these serve as specific second messenger signals. The signals activate a diverse range of effectors, leading to bacterial cell death and thus abortive phage infection. A type III CBASS system. Expression of this CBASS system (Cap18-Cap6-Cap7-CdnC-CapW-Cap17) in a susceptible E.coli (strain MG1655) confers resistance to bacteriophage P1, leading to cell lysis. By 50 minutes post-infection, ATP levels are markedly reduced while dATP has been eliminated. The C-terminal purine nucleoside phosphorylase (PNP) domain cleaves the N-glycosidic bond of (d)ATP to release adenine and a sugar triphosphate; has no activity on other (d)NTPs, nor on DNA or RNA. In vivo during phage infection has pleoitropic effects on nucleotide accumulation. This protein may be activated by the cognate CD-NTase (CdnC). This Escherichia coli (strain KTE188) protein is ATP nucleosidase Cap17.